A 1226-amino-acid chain; its full sequence is Cytosolic carboxypeptidase 1 (1226 aa).

The tract at residues 599-619 (TEDDEDTESNSSVEQASVEVP) is disordered. In terms of domain architecture, Peptidase M14 spans 848 to 1138 (YPYTYSTLQM…KFCVGLLRLK (291 aa)). 3 residues coordinate Zn(2+): H920, E923, and H1017. E1102 functions as the Proton donor/acceptor in the catalytic mechanism. S1168 bears the Phosphoserine mark. A disordered region spans residues 1206–1226 (YEPSAQEEVLSDSELSRTYLP).

The protein belongs to the peptidase M14 family. In terms of assembly, interacts with MYLK. Zn(2+) is required as a cofactor.

The protein resides in the cytoplasm. The protein localises to the cytosol. It is found in the nucleus. It localises to the mitochondrion. It carries out the reaction (L-glutamyl)(n+1)-gamma-L-glutamyl-L-glutamyl-[protein] + H2O = (L-glutamyl)(n)-gamma-L-glutamyl-L-glutamyl-[protein] + L-glutamate. It catalyses the reaction C-terminal L-alpha-aminoacyl-L-glutamyl-L-glutamyl-[tubulin] + H2O = C-terminal L-alpha-aminoacyl-L-glutamyl-[tubulin] + L-glutamate. Functionally, metallocarboxypeptidase that mediates protein deglutamylation of tubulin and non-tubulin target proteins. Catalyzes the removal of polyglutamate side chains present on the gamma-carboxyl group of glutamate residues within the C-terminal tail of alpha- and beta-tubulin. Specifically cleaves tubulin long-side-chains, while it is not able to remove the branching point glutamate. Also catalyzes the removal of polyglutamate residues from the carboxy-terminus of alpha-tubulin as well as non-tubulin proteins such as MYLK. Involved in KLF4 deglutamylation which promotes KLF4 proteasome-mediated degradation, thereby negatively regulating cell pluripotency maintenance and embryogenesis. The sequence is that of Cytosolic carboxypeptidase 1 from Homo sapiens (Human).